The chain runs to 1484 residues: Chromosome partition protein MukB (1484 aa).

34–41 lines the ATP pocket; that stretch reads GGNGAGKS. Coiled-coil stretches lie at residues 338–415, 496–604, 781–805, 835–868, 903–1115, and 1206–1265; these read NLVQ…RAIQ, QTAR…ALAW, AARE…ATLS, EAEM…HYDQ, HDAQ…SAKA, and DDPV…LQAV. Residues 666–783 form a flexible hinge region; the sequence is PGGTDDARLT…AVPLFGRAAR (118 aa).

Belongs to the SMC family. MukB subfamily. As to quaternary structure, homodimerization via its hinge domain. Binds to DNA via its C-terminal region. Interacts, and probably forms a ternary complex, with MukE and MukF via its C-terminal region. The complex formation is stimulated by calcium or magnesium. Interacts with tubulin-related protein FtsZ.

The protein resides in the cytoplasm. Its subcellular location is the nucleoid. Functionally, plays a central role in chromosome condensation, segregation and cell cycle progression. Functions as a homodimer, which is essential for chromosome partition. Involved in negative DNA supercoiling in vivo, and by this means organize and compact chromosomes. May achieve or facilitate chromosome segregation by condensation DNA from both sides of a centrally located replisome during cell division. This chain is Chromosome partition protein MukB, found in Sodalis glossinidius (strain morsitans).